Consider the following 579-residue polypeptide: Mitogen-activated protein kinase kinase kinase 7 (579 aa).

Residues 1 to 300 form an interaction with MAPK8IP1 region; that stretch reads MSTASAASSS…FPGADEPLQY (300 aa). The Protein kinase domain occupies 36-291; sequence IEVEEVVGRG…KIMTHLMRYF (256 aa). Residues 42–50 and Lys63 contribute to the ATP site; that span reads VGRGAFGVV. Lys72 is covalently cross-linked (Glycyl lysine isopeptide (Lys-Gly) (interchain with G-Cter in ubiquitin)). Asp156 serves as the catalytic Proton acceptor. Lys158 is covalently cross-linked (Glycyl lysine isopeptide (Lys-Gly) (interchain with G-Cter in ubiquitin)). Thr184 and Thr187 each carry phosphothreonine; by autocatalysis. Phosphoserine; by autocatalysis is present on Ser192. Lys209 is covalently cross-linked (Glycyl lysine isopeptide (Lys-Gly) (interchain with G-Cter in ubiquitin)). 2 disordered regions span residues 301-339 and 354-391; these read PCQY…EQVP and KNQA…MSAD. The segment covering 306–322 has biased composition (polar residues); the sequence is DEGQSNSATSTGSFMDI. Low complexity-rich tracts occupy residues 323-334 and 361-375; these read TSTNTSNKSDTN and SESG…RGSS. Ser367, Ser389, and Ser412 each carry phosphoserine. Positions 416-425 are enriched in polar residues; that stretch reads LTVTGTDPGQ. Residues 416–466 form a disordered region; that stretch reads LTVTGTDPGQVSSRSSSPSVRMITTSGPTSEKPARSHPWTPDDSTDTNGSD. Over residues 426–436 the composition is skewed to low complexity; sequence VSSRSSSPSVR. Ser428 bears the Phosphoserine mark.

It belongs to the protein kinase superfamily. STE Ser/Thr protein kinase family. MAP kinase kinase kinase subfamily. Can form homodimer. Binds both upstream activators and downstream substrates in multimolecular complexes. Interacts with TAB1/MAP3K7IP1, TAB2/MAP3K7IP2 and TAB3/MAP3K7IP3. Identified in the TRIKA2 complex composed of MAP3K7/TAK1, TAB1/MAP3K7IP1 and TAB2/MAP3K7IP2. Interacts with PPM1L and PPM1B/PP2CB. Interaction with PP2A and PPP6C leads to its repressed activity. Interacts with TRAF6 and TAB1/MAP3K7IP1; during IL-1 signaling. Interacts with TAOK1 and TAOK2; interaction with TAOK2 interferes with MAP3K7 interaction with IKKA, thus preventing NF-kappa-B activation. Interacts with DYNC2I2 (via WD domains). Interacts with CYLD and RBCK1. Interacts with TGFBR1; induces MAP3K7/TAK1 activation by TRAF6. Interacts with MAPK8IP1 and SMAD6. Interacts with isoform 1 of VRK2. Interacts with DAB2; the interaction is induced by TGF-beta stimulation and may mediate TGF-beta stimulated JNK activation. Interacts with TRIM5. Part of a complex containing ITCH, NDFIP1 and MAP3K7. Interacts with IFIT5; the interaction synergizes the recruitment of IKK to MAP3K7 and enhances IKK phosphorylation. Interacts with PLEKHM1 (via N- and C-terminus). Found in a complex with SH3RF1, RAC2, MAP2K7/MKK7, MAPK8IP1/JIP1, MAPK8/JNK1 and MAPK9/JNK2. Interacts with SASH1. Interacts with RIPK1. It depends on Mg(2+) as a cofactor. In terms of processing, association with TAB1/MAP3K7IP1 promotes autophosphorylation at Ser-192 and subsequent activation. Association with TAB2/MAP3K7IP2, itself associated with free unanchored Lys-63 polyubiquitin chain, promotes autophosphorylation and subsequent activation of MAP3K7. Dephosphorylation at Ser-192 by PPM1B/PP2CB and at Thr-187 by PP2A and PPP6C leads to inactivation. 'Lys-48'-linked polyubiquitination at Lys-72 is induced by TNFalpha, and leads to proteasomal degradation. Undergoes 'Lys-48'-linked polyubiquitination catalyzed by ITCH. 'Lys-63'-linked polyubiquitination at Lys-158 by TRIM8 does not lead to proteasomal degradation but contributes to autophosphorylation and activation. Deubiquitinated by CYLD, a protease that selectively cleaves 'Lys-63'-linked ubiquitin chains. Deubiquitinated by USP19; leading to negative regulation of TNF-alpha- and IL-1beta-triggered NF-kappa-B activation.

It localises to the cytoplasm. Its subcellular location is the cell membrane. It carries out the reaction L-seryl-[protein] + ATP = O-phospho-L-seryl-[protein] + ADP + H(+). It catalyses the reaction L-threonyl-[protein] + ATP = O-phospho-L-threonyl-[protein] + ADP + H(+). With respect to regulation, activated by pro-inflammatory cytokines and in response to physical and chemical stresses, including osmotic stress, oxidative stress, arsenic and ultraviolet light irradiation. Activated by 'Lys-63'-linked polyubiquitination and by autophosphorylation. Association with TAB1/MAP3K7IP1 and TAB2/MAP3K7IP2 promotes activation through autophosphorylation, whereas PPM1B/PP2CB, PP2A and PPP6C dephosphorylation leads to inactivation. Ceramides are also able to activate MAP3K7/TAK1. Serine/threonine kinase which acts as an essential component of the MAP kinase signal transduction pathway. Plays an important role in the cascades of cellular responses evoked by changes in the environment. Mediates signal transduction of TRAF6, various cytokines including interleukin-1 (IL-1), transforming growth factor-beta (TGFB), TGFB-related factors like BMP2 and BMP4, toll-like receptors (TLR), tumor necrosis factor receptor CD40 and B-cell receptor (BCR). Once activated, acts as an upstream activator of the MKK/JNK signal transduction cascade and the p38 MAPK signal transduction cascade through the phosphorylation and activation of several MAP kinase kinases like MAP2K1/MEK1, MAP2K3/MKK3, MAP2K6/MKK6 and MAP2K7/MKK7. These MAP2Ks in turn activate p38 MAPKs and c-jun N-terminal kinases (JNKs); both p38 MAPK and JNK pathways control the transcription factors activator protein-1 (AP-1). Independently of MAP2Ks and p38 MAPKs, acts as a key activator of NF-kappa-B by promoting activation of the I-kappa-B-kinase (IKK) core complex. Mechanistically, recruited to polyubiquitin chains of RIPK2 and IKBKG/NEMO via TAB2/MAP3K7IP2 and TAB3/MAP3K7IP3, and catalyzes phosphorylation and activation of IKBKB/IKKB component of the IKK complex, leading to NF-kappa-B activation. In osmotic stress signaling, plays a major role in the activation of MAPK8/JNK1, but not that of NF-kappa-B. Promotes TRIM5 capsid-specific restriction activity. Phosphorylates RIPK1 at 'Ser-321' which positively regulates RIPK1 interaction with RIPK3 to promote necroptosis but negatively regulates RIPK1 kinase activity and its interaction with FADD to mediate apoptosis. Phosphorylates STING1 in response to cGAMP-activation, promoting association between STEEP1 and STING1 and STING1 translocation to COPII vesicles. The protein is Mitogen-activated protein kinase kinase kinase 7 (MAP3K7) of Bos taurus (Bovine).